A 101-amino-acid polypeptide reads, in one-letter code: MEPVDPNLEPWKHPGSQPRTACTNCYCKKCCFHCQVCFITKGLGISYGRKKRRQRQRAPDSSQNHQDSLSKQPSSQPRGDPTGPKESKKEVERETETDPLD.

Residues 1-24 (MEPVDPNLEPWKHPGSQPRTACTN) are interaction with human CREBBP. Residues 1-48 (MEPVDPNLEPWKHPGSQPRTACTNCYCKKCCFHCQVCFITKGLGISYG) form a transactivation region. Zn(2+)-binding residues include cysteine 22, cysteine 25, and cysteine 27. Residues 22-37 (CTNCYCKKCCFHCQVC) form a cysteine-rich region. N6-acetyllysine; by host PCAF is present on lysine 28. Cysteine 30, histidine 33, cysteine 34, and cysteine 37 together coordinate Zn(2+). The tract at residues 38–48 (FITKGLGISYG) is core. The segment at 48 to 101 (GRKKRRQRQRAPDSSQNHQDSLSKQPSSQPRGDPTGPKESKKEVERETETDPLD) is disordered. The short motif at 49–57 (RKKRRQRQR) is the Nuclear localization signal, RNA-binding (TAR), and protein transduction element. The interaction with the host capping enzyme RNGTT stretch occupies residues 49-86 (RKKRRQRQRAPDSSQNHQDSLSKQPSSQPRGDPTGPKE). N6-acetyllysine; by host EP300 and GCN5L2 is present on residues lysine 50 and lysine 51. Residues arginine 52 and arginine 53 each carry the asymmetric dimethylarginine; by host PRMT6 modification. Positions 59 to 77 (PDSSQNHQDSLSKQPSSQP) are enriched in polar residues. Lysine 71 participates in a covalent cross-link: Glycyl lysine isopeptide (Lys-Gly) (interchain with G-Cter in ubiquitin). The Cell attachment site signature appears at 78-80 (RGD). Basic and acidic residues predominate over residues 83 to 101 (GPKESKKEVERETETDPLD).

This sequence belongs to the lentiviruses Tat family. In terms of assembly, interacts with host CCNT1. Associates with the P-TEFb complex composed at least of Tat, P-TEFb (CDK9 and CCNT1), TAR RNA, RNA Pol II. Recruits the HATs CREBBP, TAF1/TFIID, EP300, PCAF and GCN5L2. Interacts with host KAT5/Tip60; this interaction targets the latter to degradation. Interacts with the host deacetylase SIRT1. Interacts with host capping enzyme RNGTT; this interaction stimulates RNGTT. Binds to host KDR, and to the host integrins ITGAV/ITGB3 and ITGA5/ITGB1. Interacts with host KPNB1/importin beta-1 without previous binding to KPNA1/importin alpha-1. Interacts with EIF2AK2. Interacts with host nucleosome assembly protein NAP1L1; this interaction may be required for the transport of Tat within the nucleus, since the two proteins interact at the nuclear rim. Interacts with host C1QBP/SF2P32; this interaction involves lysine-acetylated Tat. Interacts with the host chemokine receptors CCR2, CCR3 and CXCR4. Interacts with host DPP4/CD26; this interaction may trigger an anti-proliferative effect. Interacts with host LDLR. Interacts with the host extracellular matrix metalloproteinase MMP1. Interacts with host PRMT6; this interaction mediates Tat's methylation. Interacts with, and is ubiquitinated by MDM2/Hdm2. Interacts with host PSMC3 and HTATIP2. Interacts with STAB1; this interaction may overcome SATB1-mediated repression of IL2 and IL2RA (interleukin) in T cells by binding to the same domain than HDAC1. Interacts (when acetylated) with human CDK13, thereby increasing HIV-1 mRNA splicing and promoting the production of the doubly spliced HIV-1 protein Nef. Interacts with host TBP; this interaction modulates the activity of transcriptional pre-initiation complex. Interacts with host RELA. Interacts with host PLSCR1; this interaction negatively regulates Tat transactivation activity by altering its subcellular distribution. Asymmetrical arginine methylation by host PRMT6 seems to diminish the transactivation capacity of Tat and affects the interaction with host CCNT1. Post-translationally, acetylation by EP300, CREBBP, GCN5L2/GCN5 and PCAF regulates the transactivation activity of Tat. EP300-mediated acetylation of Lys-50 promotes dissociation of Tat from the TAR RNA through the competitive binding to PCAF's bromodomain. In addition, the non-acetylated Tat's N-terminus can also interact with PCAF. PCAF-mediated acetylation of Lys-28 enhances Tat's binding to CCNT1. Lys-50 is deacetylated by SIRT1. In terms of processing, polyubiquitination by host MDM2 does not target Tat to degradation, but activates its transactivation function and fosters interaction with CCNT1 and TAR RNA. Phosphorylated by EIF2AK2 on serine and threonine residues adjacent to the basic region important for TAR RNA binding and function. Phosphorylation of Tat by EIF2AK2 is dependent on the prior activation of EIF2AK2 by dsRNA.

The protein resides in the host nucleus. Its subcellular location is the host nucleolus. The protein localises to the host cytoplasm. It localises to the secreted. Transcriptional activator that increases RNA Pol II processivity, thereby increasing the level of full-length viral transcripts. Recognizes a hairpin structure at the 5'-LTR of the nascent viral mRNAs referred to as the transactivation responsive RNA element (TAR) and recruits the cyclin T1-CDK9 complex (P-TEFb complex) that will in turn hyperphosphorylate the RNA polymerase II to allow efficient elongation. The CDK9 component of P-TEFb and other Tat-activated kinases hyperphosphorylate the C-terminus of RNA Pol II that becomes stabilized and much more processive. Other factors such as HTATSF1/Tat-SF1, SUPT5H/SPT5, and HTATIP2 are also important for Tat's function. Besides its effect on RNA Pol II processivity, Tat induces chromatin remodeling of proviral genes by recruiting the histone acetyltransferases (HATs) CREBBP, EP300 and PCAF to the chromatin. This also contributes to the increase in proviral transcription rate, especially when the provirus integrates in transcriptionally silent region of the host genome. To ensure maximal activation of the LTR, Tat mediates nuclear translocation of NF-kappa-B by interacting with host RELA. Through its interaction with host TBP, Tat may also modulate transcription initiation. Tat can reactivate a latently infected cell by penetrating in it and transactivating its LTR promoter. In the cytoplasm, Tat is thought to act as a translational activator of HIV-1 mRNAs. Its function is as follows. Extracellular circulating Tat can be endocytosed by surrounding uninfected cells via the binding to several surface receptors such as CD26, CXCR4, heparan sulfate proteoglycans (HSPG) or LDLR. Neurons are rarely infected, but they internalize Tat via their LDLR. Through its interaction with nuclear HATs, Tat is potentially able to control the acetylation-dependent cellular gene expression. Modulates the expression of many cellular genes involved in cell survival, proliferation or in coding for cytokines or cytokine receptors. Tat plays a role in T-cell and neurons apoptosis. Tat induced neurotoxicity and apoptosis probably contribute to neuroAIDS. Circulating Tat also acts as a chemokine-like and/or growth factor-like molecule that binds to specific receptors on the surface of the cells, affecting many cellular pathways. In the vascular system, Tat binds to ITGAV/ITGB3 and ITGA5/ITGB1 integrins dimers at the surface of endothelial cells and competes with bFGF for heparin-binding sites, leading to an excess of soluble bFGF. This is Protein Tat from Human immunodeficiency virus type 1 group M subtype B (isolate SF33) (HIV-1).